Consider the following 395-residue polypeptide: Putative ankyrin repeat protein RF_0950 (395 aa).

7 ANK repeats span residues 3–32, 36–65, 69–98, 101–130, 134–166, 172–201, and 205–234; these read YQKE…NPNT, YGKL…DPNA, IKDP…NPNV, RHEN…DPNQ, NGNT…EKAL, NGET…TVNI, and AGNT…ELNE. The Glutamine amidotransferase type-1 domain maps to 272–395; the sequence is KTKLIYQGGD…YLKVPILKEK (124 aa). The active-site Nucleophile is the Cys377.

In Rickettsia felis (strain ATCC VR-1525 / URRWXCal2) (Rickettsia azadi), this protein is Putative ankyrin repeat protein RF_0950.